We begin with the raw amino-acid sequence, 585 residues long: CTP synthase (585 aa).

An amidoligase domain region spans residues 1-281 (MPALRKHPHT…DAYVVRRLNL (281 aa)). Residue S23 participates in CTP binding. S23 is a UTP binding site. Residues 24 to 29 (SLGKGL) and D81 contribute to the ATP site. Mg(2+)-binding residues include D81 and E155. CTP contacts are provided by residues 162-164 (DIE), 202-207 (KTKPTQ), and K238. UTP-binding positions include 202–207 (KTKPTQ) and K238. The Glutamine amidotransferase type-1 domain occupies 306–554 (RIALVGKYID…VGAAVEYNNG (249 aa)). L-glutamine is bound at residue G369. The active-site Nucleophile; for glutamine hydrolysis is C396. Residues 397–400 (LGLQ), E419, and R480 contribute to the L-glutamine site. Catalysis depends on residues H527 and E529. The interval 564 to 585 (IPTADHQSNGAEHALEDAPARG) is disordered. Over residues 576–585 (HALEDAPARG) the composition is skewed to basic and acidic residues.

The protein belongs to the CTP synthase family. Homotetramer.

The catalysed reaction is UTP + L-glutamine + ATP + H2O = CTP + L-glutamate + ADP + phosphate + 2 H(+). The enzyme catalyses L-glutamine + H2O = L-glutamate + NH4(+). It catalyses the reaction UTP + NH4(+) + ATP = CTP + ADP + phosphate + 2 H(+). It functions in the pathway pyrimidine metabolism; CTP biosynthesis via de novo pathway; CTP from UDP: step 2/2. Allosterically activated by GTP, when glutamine is the substrate; GTP has no effect on the reaction when ammonia is the substrate. The allosteric effector GTP functions by stabilizing the protein conformation that binds the tetrahedral intermediate(s) formed during glutamine hydrolysis. Inhibited by the product CTP, via allosteric rather than competitive inhibition. Its function is as follows. Catalyzes the ATP-dependent amination of UTP to CTP with either L-glutamine or ammonia as the source of nitrogen. Regulates intracellular CTP levels through interactions with the four ribonucleotide triphosphates. In Mycolicibacterium gilvum (strain PYR-GCK) (Mycobacterium gilvum (strain PYR-GCK)), this protein is CTP synthase.